Reading from the N-terminus, the 149-residue chain is Extracellular protease inhibitor 1 (149 aa).

A signal peptide spans Met-1–Ala-16. 2 consecutive Kazal-like domains span residues Glu-29–Gly-86 and Gln-88–Gly-141. Intrachain disulfides connect Cys-35–Cys-65 and Cys-39–Cys-58. An N-linked (GlcNAc...) asparagine glycan is attached at Asn-67. 3 cysteine pairs are disulfide-bonded: Cys-94–Cys-124, Cys-98–Cys-117, and Cys-106–Cys-139.

As to quaternary structure, interacts with host subtilisin-like protease P69B.

The protein localises to the secreted. Its function is as follows. Secreted effector that interacts with and inhibits the pathogenesis-related P69B subtilisin-like serine protease of host tomato. Inhibition of host proteases by a pathogen extracellular protease inhibitor forms a specific type of defense-counterdefense mechanism between plants and microbial pathogens. This is Extracellular protease inhibitor 1 from Phytophthora infestans (Potato late blight agent).